A 74-amino-acid chain; its full sequence is Porwaprin-a (74 aa).

Positions 1–24 are cleaved as a signal peptide; that stretch reads MSSGGLLLLLGLLTLWEVLTPVSS. A WAP domain is found at 27 to 71; that stretch reads RPKKLGLCPPRPQKPCVKECKNDWSCPGQQKCCNYGCIDECRDPI. 4 cysteine pairs are disulfide-bonded: Cys-34-Cys-59, Cys-42-Cys-63, Cys-46-Cys-58, and Cys-52-Cys-67.

It belongs to the venom waprin family. Expressed by the venom gland.

Its subcellular location is the secreted. Functionally, damages membranes of susceptible bacteria. Has no hemolytic activity. Not toxic to mice. Does not inhibit the proteinases elastase and cathepsin G. The sequence is that of Porwaprin-a from Pseudechis porphyriacus (Red-bellied black snake).